The following is a 137-amino-acid chain: Nucleoside diphosphate kinase (137 aa).

ATP is bound by residues Lys9, Phe57, Arg85, Thr91, Arg102, and Asn112. Residue His115 is the Pros-phosphohistidine intermediate of the active site.

The protein belongs to the NDK family. Homotetramer. It depends on Mg(2+) as a cofactor.

It localises to the cytoplasm. It catalyses the reaction a 2'-deoxyribonucleoside 5'-diphosphate + ATP = a 2'-deoxyribonucleoside 5'-triphosphate + ADP. It carries out the reaction a ribonucleoside 5'-diphosphate + ATP = a ribonucleoside 5'-triphosphate + ADP. Its function is as follows. Major role in the synthesis of nucleoside triphosphates other than ATP. The ATP gamma phosphate is transferred to the NDP beta phosphate via a ping-pong mechanism, using a phosphorylated active-site intermediate. The sequence is that of Nucleoside diphosphate kinase from Aliarcobacter butzleri (strain RM4018) (Arcobacter butzleri).